The chain runs to 313 residues: HPr kinase/phosphorylase (313 aa).

Catalysis depends on residues histidine 140 and lysine 161. 155–162 (GNSGAGKS) provides a ligand contact to ATP. Serine 162 provides a ligand contact to Mg(2+). Aspartate 179 functions as the Proton acceptor; for phosphorylation activity. Proton donor; for dephosphorylation activity in the catalytic mechanism. Positions 203 to 212 (IEVRGLGILN) are important for the catalytic mechanism of both phosphorylation and dephosphorylation. Glutamate 204 is a binding site for Mg(2+). Arginine 246 is a catalytic residue. The segment at 267–272 (PVAAGR) is important for the catalytic mechanism of dephosphorylation.

The protein belongs to the HPrK/P family. As to quaternary structure, homohexamer. The cofactor is Mg(2+).

The catalysed reaction is [HPr protein]-L-serine + ATP = [HPr protein]-O-phospho-L-serine + ADP + H(+). It catalyses the reaction [HPr protein]-O-phospho-L-serine + phosphate + H(+) = [HPr protein]-L-serine + diphosphate. In terms of biological role, catalyzes the ATP- as well as the pyrophosphate-dependent phosphorylation of a specific serine residue in HPr, a phosphocarrier protein of the phosphoenolpyruvate-dependent sugar phosphotransferase system (PTS). HprK/P also catalyzes the pyrophosphate-producing, inorganic phosphate-dependent dephosphorylation (phosphorolysis) of seryl-phosphorylated HPr (P-Ser-HPr). The polypeptide is HPr kinase/phosphorylase (Azoarcus sp. (strain BH72)).